Here is a 381-residue protein sequence, read N- to C-terminus: Homoserine O-succinyltransferase (381 aa).

Positions 45–360 (NAVLVCHALN…PHGHDAFLLD (316 aa)) constitute an AB hydrolase-1 domain. The Nucleophile role is filled by S151. Residue R221 coordinates substrate. Active-site residues include D321 and H354. Position 355 (D355) interacts with substrate.

It belongs to the AB hydrolase superfamily. MetX family. As to quaternary structure, homodimer.

The protein localises to the cytoplasm. It catalyses the reaction L-homoserine + succinyl-CoA = O-succinyl-L-homoserine + CoA. Its pathway is amino-acid biosynthesis; L-methionine biosynthesis via de novo pathway; O-succinyl-L-homoserine from L-homoserine: step 1/1. Its function is as follows. Transfers a succinyl group from succinyl-CoA to L-homoserine, forming succinyl-L-homoserine. This is Homoserine O-succinyltransferase from Burkholderia vietnamiensis (strain G4 / LMG 22486) (Burkholderia cepacia (strain R1808)).